A 242-amino-acid polypeptide reads, in one-letter code: tRNA pseudouridine synthase A (242 aa).

Asp51 acts as the Nucleophile in catalysis. Tyr107 provides a ligand contact to substrate.

The protein belongs to the tRNA pseudouridine synthase TruA family. Homodimer.

The catalysed reaction is uridine(38/39/40) in tRNA = pseudouridine(38/39/40) in tRNA. Formation of pseudouridine at positions 38, 39 and 40 in the anticodon stem and loop of transfer RNAs. This Helicobacter pylori (strain Shi470) protein is tRNA pseudouridine synthase A.